Here is a 323-residue protein sequence, read N- to C-terminus: Coiled-coil domain-containing protein 160 (323 aa).

Residues serine 143–serine 290 are a coiled coil.

It belongs to the CCDC160 family.

This is Coiled-coil domain-containing protein 160 (CCDC160) from Bos taurus (Bovine).